Reading from the N-terminus, the 231-residue chain is NKG2-C type II integral membrane protein (231 aa).

Positions 1–12 (MNKQRGTFSEVS) are enriched in polar residues. Residues 1–32 (MNKQRGTFSEVSLAQDPKRQQRKPKGNKSSIS) are disordered. The Cytoplasmic portion of the chain corresponds to 1–70 (MNKQRGTFSE…CQGLLPPPEK (70 aa)). Residues 71–93 (LTAEVLGIICIVLMATVLKTIVL) form a helical; Signal-anchor for type II membrane protein membrane-spanning segment. At 94–231 (IPFLEQNNFS…SMIYHCKHKL (138 aa)) the chain is on the extracellular side. Asn-100 carries N-linked (GlcNAc...) asparagine glycosylation. The region spanning 116-229 (HCPEEWITYS…GSSMIYHCKH (114 aa)) is the C-type lectin domain. 3 cysteine pairs are disulfide-bonded: Cys-117-Cys-128, Cys-145-Cys-227, and Cys-206-Cys-219. Residues Asn-149 and Asn-178 are each glycosylated (N-linked (GlcNAc...) asparagine).

Heterodimer with KLRD1; disulfide-linked. KLRD1-KLRC2 receptor complex interacts with TYROBP homodimer; this interaction is necessary for the expression on the cell surface. KLRD1-KLRC2 receptor complex can bind with low affinity to HLA-E loaded with self-peptides derived from the signal sequence of classical MHC class Ia. As to expression, expressed in NK cell subsets, in particular in adaptive CD57-positive NK cells (at protein level). Expressed in terminally differentiated cytotoxic gamma-delta T cells (at protein level). Expressed in alpha-beta T cells subsets (at protein level). KLRD1-KLRC1 and KLRD1-KLRC2 are differentially expressed within NK and T cell populations, with only minor subsets expressing both receptor complexes (at protein level).

Its subcellular location is the cell membrane. Functionally, immune activating receptor involved in self-nonself discrimination. In complex with KLRD1 on cytotoxic lymphocyte subsets, recognizes non-classical major histocompatibility (MHC) class Ib HLA-E loaded with signal sequence-derived peptides from non-classical MHC class Ib HLA-G molecules, likely playing a role in the generation and effector functions of adaptive natural killer (NK) cells and in maternal-fetal tolerance during pregnancy. Regulates the effector functions of terminally differentiated cytotoxic lymphocyte subsets, and in particular may play a role in adaptive NK cell response to viral infection. Upon HLA-E-peptide binding, transmits intracellular signals via the adapter protein TYROBP/DAP12, triggering the phosphorylation of proximal signaling molecules and cell activation. The polypeptide is NKG2-C type II integral membrane protein (KLRC2) (Homo sapiens (Human)).